The chain runs to 172 residues: VQ motif-containing protein 17 (172 aa).

Positions 51–60 (FREIVQNLTG) match the VQ motif. The tract at residues 60-97 (GKQDHHHHDLPHQKGLKRNPRSRRSHDHHEVHDMNKSH) is disordered. Positions 61–71 (KQDHHHHDLPH) are enriched in basic and acidic residues. The segment covering 72–85 (QKGLKRNPRSRRSH) has biased composition (basic residues). The span at 86–95 (DHHEVHDMNK) shows a compositional bias: basic and acidic residues.

The protein localises to the nucleus. Functionally, may function as positive regulator of plant growth. This Arabidopsis thaliana (Mouse-ear cress) protein is VQ motif-containing protein 17.